Here is a 318-residue protein sequence, read N- to C-terminus: Transaldolase (318 aa).

The Schiff-base intermediate with substrate role is filled by K131.

It belongs to the transaldolase family. Type 1 subfamily. As to quaternary structure, homodimer.

Its subcellular location is the cytoplasm. The enzyme catalyses D-sedoheptulose 7-phosphate + D-glyceraldehyde 3-phosphate = D-erythrose 4-phosphate + beta-D-fructose 6-phosphate. Its pathway is carbohydrate degradation; pentose phosphate pathway; D-glyceraldehyde 3-phosphate and beta-D-fructose 6-phosphate from D-ribose 5-phosphate and D-xylulose 5-phosphate (non-oxidative stage): step 2/3. In terms of biological role, transaldolase is important for the balance of metabolites in the pentose-phosphate pathway. This Buchnera aphidicola subsp. Cinara cedri (strain Cc) protein is Transaldolase.